The chain runs to 40 residues: Beta-defensin 2 (40 aa).

Cystine bridges form between Cys-7-Cys-36, Cys-14-Cys-29, and Cys-19-Cys-37.

Belongs to the beta-defensin family. Neutrophilic granules.

Its subcellular location is the secreted. Its function is as follows. Has bactericidal activity. Active against E.coli ML35 and S.aureus 502A. In Bos taurus (Bovine), this protein is Beta-defensin 2 (DEFB2).